A 687-amino-acid polypeptide reads, in one-letter code: Protein SDA1 homolog (687 aa).

Residues S232, S234, and S236 each carry the phosphoserine modification. Residues 254 to 315 (KKGSKNKKKL…SCKERFEVKM (62 aa)) are a coiled coil. Residues 484–509 (LEKGENTEDDEDGWESASLSEEEEED) are disordered. The span at 490–509 (TEDDEDGWESASLSEEEEED) shows a compositional bias: acidic residues. Residue T552 is modified to Phosphothreonine. 3 positions are modified to phosphoserine: S585, S589, and S595. Residues 604–651 (KKPKSDKETRLATAMAGRTDRKEFVRKKTKINPFSSSTNKEKKKQKNF) form a disordered region.

Belongs to the SDA1 family.

It localises to the nucleus. The protein localises to the nucleolus. Functionally, required for 60S pre-ribosomal subunits export to the cytoplasm. This chain is Protein SDA1 homolog (Sdad1), found in Mus musculus (Mouse).